A 473-amino-acid polypeptide reads, in one-letter code: Bifunctional protein GlmU (473 aa).

A pyrophosphorylase region spans residues 1 to 240 (MAIHPLDVVI…AAQVAGVNSP (240 aa)). Residues K25, Q83, 88–89 (GT), 110–112 (SGD), G147, E165, and N238 each bind UDP-N-acetyl-alpha-D-glucosamine. Position 112 (D112) interacts with Mg(2+). N238 is a Mg(2+) binding site. The linker stretch occupies residues 241–261 (VQLAELERVYQQRLATTLMEQ). Residues 262–473 (GVRLADPARL…WARPVKKPGV (212 aa)) are N-acetyltransferase. UDP-N-acetyl-alpha-D-glucosamine contacts are provided by R348 and K366. Catalysis depends on H378, which acts as the Proton acceptor. 2 residues coordinate UDP-N-acetyl-alpha-D-glucosamine: Y381 and N392. Residues A395, 401-402 (NY), S420, G438, and R455 each bind acetyl-CoA.

It in the N-terminal section; belongs to the N-acetylglucosamine-1-phosphate uridyltransferase family. The protein in the C-terminal section; belongs to the transferase hexapeptide repeat family. In terms of assembly, homotrimer. Requires Mg(2+) as cofactor.

Its subcellular location is the cytoplasm. It catalyses the reaction alpha-D-glucosamine 1-phosphate + acetyl-CoA = N-acetyl-alpha-D-glucosamine 1-phosphate + CoA + H(+). It carries out the reaction N-acetyl-alpha-D-glucosamine 1-phosphate + UTP + H(+) = UDP-N-acetyl-alpha-D-glucosamine + diphosphate. Its pathway is nucleotide-sugar biosynthesis; UDP-N-acetyl-alpha-D-glucosamine biosynthesis; N-acetyl-alpha-D-glucosamine 1-phosphate from alpha-D-glucosamine 6-phosphate (route II): step 2/2. It participates in nucleotide-sugar biosynthesis; UDP-N-acetyl-alpha-D-glucosamine biosynthesis; UDP-N-acetyl-alpha-D-glucosamine from N-acetyl-alpha-D-glucosamine 1-phosphate: step 1/1. It functions in the pathway bacterial outer membrane biogenesis; LPS lipid A biosynthesis. Catalyzes the last two sequential reactions in the de novo biosynthetic pathway for UDP-N-acetylglucosamine (UDP-GlcNAc). The C-terminal domain catalyzes the transfer of acetyl group from acetyl coenzyme A to glucosamine-1-phosphate (GlcN-1-P) to produce N-acetylglucosamine-1-phosphate (GlcNAc-1-P), which is converted into UDP-GlcNAc by the transfer of uridine 5-monophosphate (from uridine 5-triphosphate), a reaction catalyzed by the N-terminal domain. The protein is Bifunctional protein GlmU of Polaromonas naphthalenivorans (strain CJ2).